The sequence spans 391 residues: Thioredoxin-interacting protein (391 aa).

Residue Lys-212 forms a Glycyl lysine isopeptide (Lys-Gly) (interchain with G-Cter in ubiquitin) linkage. Ser-361 carries the phosphoserine modification.

The protein belongs to the arrestin family. In terms of assembly, homodimer; disulfide-linked. Interacts with TXN/thioredoxin through its redox-active site. Interacts with transcriptional repressors ZBTB16, ZBTB32 and HDAC1. Interacts with DDIT4. Ubiquitinated; undergoes heterotypic 'Lys-48'-/'Lys-63'-branched polyubiquitination catalyzed by ITCH and UBR5 resulting in proteasomal degradation. Deubiquitinated by USP5, leading to TXNIP stabilization.

The protein localises to the cytoplasm. It is found in the nucleus. Functionally, may act as an oxidative stress mediator by inhibiting thioredoxin activity or by limiting its bioavailability. Interacts with COPS5 and restores COPS5-induced suppression of CDKN1B stability, blocking the COPS5-mediated translocation of CDKN1B from the nucleus to the cytoplasm. Functions as a transcriptional repressor, possibly by acting as a bridge molecule between transcription factors and corepressor complexes, and over-expression will induce G0/G1 cell cycle arrest. Required for the maturation of natural killer cells. Acts as a suppressor of tumor cell growth. Inhibits the proteasomal degradation of DDIT4, and thereby contributes to the inhibition of the mammalian target of rapamycin complex 1 (mTORC1). This Homo sapiens (Human) protein is Thioredoxin-interacting protein (TXNIP).